The primary structure comprises 181 residues: Transcription termination/antitermination protein NusG (181 aa).

One can recognise a KOW domain in the interval 130-161 (PGEMVRVNDGPFADFNGVVEEVDYEKSRLKVS).

Belongs to the NusG family. In terms of assembly, monomer. Interacts with the transcription termination factor Rho and with RNA polymerase.

Participates in transcription elongation, termination and antitermination. In the absence of Rho, increases the rate of transcription elongation by the RNA polymerase (RNAP), probably by partially suppressing pausing. In the presence of Rho, modulates most Rho-dependent termination events by interacting with the RNAP to render the complex more susceptible to the termination activity of Rho. May be required to overcome a kinetic limitation of Rho to function at certain terminators. Also involved in ribosomal RNA transcriptional antitermination. The protein is Transcription termination/antitermination protein NusG of Shigella flexneri.